We begin with the raw amino-acid sequence, 497 residues long: Acetyl-coenzyme A carboxylase carboxyl transferase subunit beta (497 aa).

Residues 217 to 489 (LWLQCDNCYG…NQNSNQYSQY (273 aa)) form the CoA carboxyltransferase N-terminal domain. The Zn(2+) site is built by C221, C224, C240, and C243. A C4-type zinc finger spans residues 221–243 (CDNCYGLNYKKVLKSKMTICEQC).

This sequence belongs to the AccD/PCCB family. In terms of assembly, acetyl-CoA carboxylase is a heterohexamer composed of biotin carboxyl carrier protein, biotin carboxylase and 2 subunits each of ACCase subunit alpha and ACCase plastid-coded subunit beta (accD). It depends on Zn(2+) as a cofactor.

The protein resides in the plastid. The enzyme catalyses N(6)-carboxybiotinyl-L-lysyl-[protein] + acetyl-CoA = N(6)-biotinyl-L-lysyl-[protein] + malonyl-CoA. It functions in the pathway lipid metabolism; malonyl-CoA biosynthesis; malonyl-CoA from acetyl-CoA: step 1/1. Its function is as follows. Component of the acetyl coenzyme A carboxylase (ACC) complex. Biotin carboxylase (BC) catalyzes the carboxylation of biotin on its carrier protein (BCCP) and then the CO(2) group is transferred by the transcarboxylase to acetyl-CoA to form malonyl-CoA. The sequence is that of Acetyl-coenzyme A carboxylase carboxyl transferase subunit beta from Cuscuta reflexa (Southern Asian dodder).